The sequence spans 360 residues: MNPSVQQKLENLSHRFEEITGLLATPEVQNDQNRFKALSREYAQLEPCVACFRRYRETLEGLDHAQALLQDPDPEVRSLAREELETGRKRCDALEQELQILLLPRDPNDERNVFLEVRAGTGGAEAAIFAGDLQRMYSRYAERQGWRAEIVSESEGEHGGYKEVVMRISGQNVYSRLKFEAGTHRVQRVPTTEAQGRIHTSACTVAILPEFDDVEIDINPADLRIDTFRASGAGGQHVNRTDSAIRITHIPTGTVVECQDERSQHKNRARAMSLLQARILAAAQEKQNSEIAASRKLQVGSGDRSERIRTYNFPQGRLTDHRINLTIYRLDAIMEGDLDPVIDPLLQEHQADMLASLAGS.

Residue Gln-236 is modified to N5-methylglutamine.

This sequence belongs to the prokaryotic/mitochondrial release factor family. Methylated by PrmC. Methylation increases the termination efficiency of RF1.

Its subcellular location is the cytoplasm. Functionally, peptide chain release factor 1 directs the termination of translation in response to the peptide chain termination codons UAG and UAA. In Methylococcus capsulatus (strain ATCC 33009 / NCIMB 11132 / Bath), this protein is Peptide chain release factor 1.